The following is a 685-amino-acid chain: Polyphosphate kinase (685 aa).

Asparagine 45 provides a ligand contact to ATP. Arginine 375 and arginine 405 together coordinate Mg(2+). Histidine 435 serves as the catalytic Phosphohistidine intermediate. ATP is bound by residues tyrosine 468, arginine 564, and histidine 592.

The protein belongs to the polyphosphate kinase 1 (PPK1) family. It depends on Mg(2+) as a cofactor. In terms of processing, an intermediate of this reaction is the autophosphorylated ppk in which a phosphate is covalently linked to a histidine residue through a N-P bond.

It catalyses the reaction [phosphate](n) + ATP = [phosphate](n+1) + ADP. In terms of biological role, catalyzes the reversible transfer of the terminal phosphate of ATP to form a long-chain polyphosphate (polyP). The polypeptide is Polyphosphate kinase (Neisseria meningitidis serogroup C (strain 053442)).